A 461-amino-acid polypeptide reads, in one-letter code: Fumarate hydratase class II (461 aa).

Substrate-binding positions include 97–99 (SGT), 127–130 (HPND), 137–139 (SSN), and Thr185. His186 serves as the catalytic Proton donor/acceptor. The active site involves Ser316. Substrate is bound by residues Ser317 and 322–324 (KVN).

It belongs to the class-II fumarase/aspartase family. Fumarase subfamily. In terms of assembly, homotetramer.

Its subcellular location is the cytoplasm. The enzyme catalyses (S)-malate = fumarate + H2O. Its pathway is carbohydrate metabolism; tricarboxylic acid cycle; (S)-malate from fumarate: step 1/1. Functionally, involved in the TCA cycle. Catalyzes the stereospecific interconversion of fumarate to L-malate. The sequence is that of Fumarate hydratase class II from Staphylococcus haemolyticus (strain JCSC1435).